A 135-amino-acid polypeptide reads, in one-letter code: ATP synthase epsilon chain (135 aa).

The disordered stretch occupies residues Thr-101–Phe-122.

The protein belongs to the ATPase epsilon chain family. In terms of assembly, F-type ATPases have 2 components, CF(1) - the catalytic core - and CF(0) - the membrane proton channel. CF(1) has five subunits: alpha(3), beta(3), gamma(1), delta(1), epsilon(1). CF(0) has three main subunits: a, b and c.

It localises to the cellular thylakoid membrane. Produces ATP from ADP in the presence of a proton gradient across the membrane. The polypeptide is ATP synthase epsilon chain (Synechococcus sp. (strain CC9311)).